The primary structure comprises 319 residues: Acetyl-coenzyme A carboxylase carboxyl transferase subunit alpha (319 aa).

A CoA carboxyltransferase C-terminal domain is found at 35–296; sequence DLEKEIKQLE…KQRLLEQLKE (262 aa).

Belongs to the AccA family. In terms of assembly, acetyl-CoA carboxylase is a heterohexamer composed of biotin carboxyl carrier protein (AccB), biotin carboxylase (AccC) and two subunits each of ACCase subunit alpha (AccA) and ACCase subunit beta (AccD).

The protein localises to the cytoplasm. It catalyses the reaction N(6)-carboxybiotinyl-L-lysyl-[protein] + acetyl-CoA = N(6)-biotinyl-L-lysyl-[protein] + malonyl-CoA. It participates in lipid metabolism; malonyl-CoA biosynthesis; malonyl-CoA from acetyl-CoA: step 1/1. In terms of biological role, component of the acetyl coenzyme A carboxylase (ACC) complex. First, biotin carboxylase catalyzes the carboxylation of biotin on its carrier protein (BCCP) and then the CO(2) group is transferred by the carboxyltransferase to acetyl-CoA to form malonyl-CoA. This Aliivibrio fischeri (strain ATCC 700601 / ES114) (Vibrio fischeri) protein is Acetyl-coenzyme A carboxylase carboxyl transferase subunit alpha.